The following is a 315-amino-acid chain: tRNA pseudouridine synthase B (315 aa).

Residue D54 is the Nucleophile of the active site.

This sequence belongs to the pseudouridine synthase TruB family. Type 1 subfamily.

The enzyme catalyses uridine(55) in tRNA = pseudouridine(55) in tRNA. In terms of biological role, responsible for synthesis of pseudouridine from uracil-55 in the psi GC loop of transfer RNAs. This chain is tRNA pseudouridine synthase B, found in Cupriavidus taiwanensis (strain DSM 17343 / BCRC 17206 / CCUG 44338 / CIP 107171 / LMG 19424 / R1) (Ralstonia taiwanensis (strain LMG 19424)).